Consider the following 203-residue polypeptide: Meiotically up-regulated protein PB17E12.09 (203 aa).

Residues 92 to 177 (CNRKIEGYIK…KEMQLYMTKI (86 aa)) are a coiled coil.

It is found in the cytoplasm. In terms of biological role, has a role in meiosis and sporulation. The protein is Meiotically up-regulated protein PB17E12.09 of Schizosaccharomyces pombe (strain 972 / ATCC 24843) (Fission yeast).